An 806-amino-acid polypeptide reads, in one-letter code: Glycerol-3-phosphate acyltransferase (806 aa).

Residues 305–310 carry the HXXXXD motif motif; the sequence is CHRSHM.

This sequence belongs to the GPAT/DAPAT family.

The protein resides in the cell inner membrane. The enzyme catalyses sn-glycerol 3-phosphate + an acyl-CoA = a 1-acyl-sn-glycero-3-phosphate + CoA. It participates in phospholipid metabolism; CDP-diacylglycerol biosynthesis; CDP-diacylglycerol from sn-glycerol 3-phosphate: step 1/3. The chain is Glycerol-3-phosphate acyltransferase from Salmonella agona (strain SL483).